The chain runs to 459 residues: Putrescine aminotransferase (459 aa).

Residues 150–151 and Gln274 contribute to the pyridoxal 5'-phosphate site; that span reads GT. Lys300 is modified (N6-(pyridoxal phosphate)lysine). Residue Thr332 participates in pyridoxal 5'-phosphate binding.

The protein belongs to the class-III pyridoxal-phosphate-dependent aminotransferase family. Putrescine aminotransferase subfamily. Requires pyridoxal 5'-phosphate as cofactor.

It catalyses the reaction an alkane-alpha,omega-diamine + 2-oxoglutarate = an omega-aminoaldehyde + L-glutamate. The catalysed reaction is putrescine + 2-oxoglutarate = 1-pyrroline + L-glutamate + H2O. The enzyme catalyses cadaverine + 2-oxoglutarate = 5-aminopentanal + L-glutamate. It participates in amine and polyamine degradation; putrescine degradation; 4-aminobutanal from putrescine (transaminase route): step 1/1. Catalyzes the aminotransferase reaction from putrescine to 2-oxoglutarate, leading to glutamate and 4-aminobutanal, which spontaneously cyclizes to form 1-pyrroline. This is the first step in one of two pathways for putrescine degradation, where putrescine is converted into 4-aminobutanoate (gamma-aminobutyrate or GABA) via 4-aminobutanal. Also functions as a cadaverine transaminase in a a L-lysine degradation pathway to succinate that proceeds via cadaverine, glutarate and L-2-hydroxyglutarate. The sequence is that of Putrescine aminotransferase from Enterobacter sp. (strain 638).